A 368-amino-acid polypeptide reads, in one-letter code: MGGKVYAMDGLKIELKTNICLVEKCLRLVSYSNHSLYWNDPTEDCVWNCLARISRFHYPTLSLVSKGFRSLIASPELEATRSFIGETENHLCVCLNLNKNNNYNPRWFTLSPIAKQKLKSIPWHRHQYPKSSTVVANGSDIYIVGGFVCGTSSKRVFVFDSRSHQWRRLHDMRLPRVSAVVNIVDKKIYVIGGYKPRNIKDCGEVYDPNTQTWEPLLPTTVNLTIQNCVVSGGLVMGGKRYTTNGTKMNTCFVELENLLLGLSETYRDLVWRELKEDVWRVVRGLEQLSHNQNFTYVGNSGGGRRVAIWWKSMVVFRPRGRSHSTKKCKTEIWCAEISVERRGLGELWGRFSFSFRDSFIYIFLWEFF.

In terms of domain architecture, F-box spans 35–84 (SLYWNDPTEDCVWNCLARISRFHYPTLSLVSKGFRSLIASPELEATRSFI). 2 Kelch repeats span residues 140–186 (DIYI…IVDK) and 187–233 (KIYV…VSGG).

The protein is Putative F-box/kelch-repeat protein At5g02995 of Arabidopsis thaliana (Mouse-ear cress).